A 220-amino-acid chain; its full sequence is UPF0502 protein PSPPH_2577 (220 aa).

Belongs to the UPF0502 family.

The chain is UPF0502 protein PSPPH_2577 from Pseudomonas savastanoi pv. phaseolicola (strain 1448A / Race 6) (Pseudomonas syringae pv. phaseolicola (strain 1448A / Race 6)).